The following is a 346-amino-acid chain: Fe(3+) ions import ATP-binding protein FbpC 1 (346 aa).

An ABC transporter domain is found at 5–235; it reads LEVDGVDKSF…PIDVPTAEFI (231 aa). Residue 37 to 44 participates in ATP binding; that stretch reads GPSGCGKT.

It belongs to the ABC transporter superfamily. Fe(3+) ion importer (TC 3.A.1.10) family. In terms of assembly, the complex is composed of two ATP-binding proteins (FbpC), two transmembrane proteins (FbpB) and a solute-binding protein (FbpA).

The protein localises to the cell membrane. It carries out the reaction Fe(3+)(out) + ATP + H2O = Fe(3+)(in) + ADP + phosphate + H(+). Part of the ABC transporter complex FbpABC involved in Fe(3+) ions import. Responsible for energy coupling to the transport system. This is Fe(3+) ions import ATP-binding protein FbpC 1 from Rhodococcus jostii (strain RHA1).